We begin with the raw amino-acid sequence, 551 residues long: Palatinase (551 aa).

Residue Asp201 is the Nucleophile of the active site. Glu243 (proton donor) is an active-site residue.

This sequence belongs to the glycosyl hydrolase 13 family.

The catalysed reaction is 6-O-alpha-D-glucopyranosyl-D-fructose + H2O = alpha-D-glucose + D-fructose. It functions in the pathway glycan degradation; palatinose degradation. In terms of biological role, catalyzes the hydrolysis of palatinose. Shows a strict specificity toward palatinose, and cannot release glucose from the disaccharides sucrose, maltose, trehalose and melibiose. Involved in the degradation of palatinose, a sucrose isomer that is formed as a reserve material under conditions of excess carbon availability, sequestered in a form unavailable to competitors such as fungi or the host plant, and whose consumption appears to be postponed until the preferentially metabolized carbon source (e.g. sucrose) is depleted. The sequence is that of Palatinase from Erwinia rhapontici (Pectobacterium rhapontici).